We begin with the raw amino-acid sequence, 208 residues long: Large ribosomal subunit protein uL4 (208 aa).

This sequence belongs to the universal ribosomal protein uL4 family. As to quaternary structure, part of the 50S ribosomal subunit.

Its function is as follows. One of the primary rRNA binding proteins, this protein initially binds near the 5'-end of the 23S rRNA. It is important during the early stages of 50S assembly. It makes multiple contacts with different domains of the 23S rRNA in the assembled 50S subunit and ribosome. Forms part of the polypeptide exit tunnel. This Anaplasma marginale (strain Florida) protein is Large ribosomal subunit protein uL4.